The sequence spans 547 residues: ATP synthase subunit beta, mitochondrial (547 aa).

Residues 1–45 constitute a mitochondrion transit peptide; it reads MASRRLLSSFLRSSTRRSLRPSFSNPRPSFLTSYCSSPASILRRY. The span at 52-62 shows a compositional bias: low complexity; that stretch reads KEPAASKPAGT. The tract at residues 52–74 is disordered; it reads KEPAASKPAGTAGTGKGTITDEK. 226-233 contributes to the ATP binding site; the sequence is GGDWVGKT.

It belongs to the ATPase alpha/beta chains family. In terms of assembly, F-type ATPases have 2 components, CF(1) - the catalytic core - and CF(0) - the membrane proton channel. CF(1) has five subunits: alpha(3), beta(3), gamma(1), delta(1), epsilon(1). CF(0) has three main subunits: a, b and c.

The protein resides in the mitochondrion. It localises to the mitochondrion inner membrane. It catalyses the reaction ATP + H2O + 4 H(+)(in) = ADP + phosphate + 5 H(+)(out). In terms of biological role, mitochondrial membrane ATP synthase (F(1)F(0) ATP synthase or Complex V) produces ATP from ADP in the presence of a proton gradient across the membrane which is generated by electron transport complexes of the respiratory chain. F-type ATPases consist of two structural domains, F(1) - containing the extramembraneous catalytic core, and F(0) - containing the membrane proton channel, linked together by a central stalk and a peripheral stalk. During catalysis, ATP synthesis in the catalytic domain of F(1) is coupled via a rotary mechanism of the central stalk subunits to proton translocation. Subunits alpha and beta form the catalytic core in F(1). Rotation of the central stalk against the surrounding alpha(3)beta(3) subunits leads to hydrolysis of ATP in three separate catalytic sites on the beta subunits. This is ATP synthase subunit beta, mitochondrial (ATPB) from Daucus carota (Wild carrot).